The chain runs to 238 residues: MLCFLRGMAFVPFLLVTWSSAAFIISYVVAVLSGHVNPFLPYISDTGTTPPESGIFGFMINFSAFLGAATMYTRYKIVEKQNETCYFSTPVFNLVSLALGLVGCIGMGIVANFQELAVPVVHDGGALLAFVCGVVYTLLQSIISYKSCPQWNSLTTCHVRMAISAVSCAAVVPMIACASLISITKLEWNPKEKDYIYHVVSAICEWTVAFGFIFYFLTFIQDFQSVTLRISTEINDDF.

6 helical membrane passes run 9–29 (AFVP…SYVV), 53–73 (SGIF…TMYT), 91–111 (VFNL…GIVA), 116–136 (LAVP…GVVY), 161–181 (MAIS…ASLI), and 200–220 (VSAI…LTFI).

Belongs to the DRAM/TMEM150 family.

It is found in the lysosome membrane. Lysosomal modulator of autophagy that plays a central role in p53/TP53-mediated apoptosis. Not involved in p73/TP73-mediated autophagy. This chain is DNA damage-regulated autophagy modulator protein 1 (Dram1), found in Mus musculus (Mouse).